A 611-amino-acid polypeptide reads, in one-letter code: U-box domain-containing protein 12 (611 aa).

Residues 227 to 301 (IIPDEFRCPI…SQWCEANGIE (75 aa)) enclose the U-box domain. 4 ARM repeats span residues 355-394 (VNNR…NLSI), 396-435 (ENNK…SLSV), 437-476 (DENK…NLCI), and 478-517 (QGNK…ILAG).

It catalyses the reaction S-ubiquitinyl-[E2 ubiquitin-conjugating enzyme]-L-cysteine + [acceptor protein]-L-lysine = [E2 ubiquitin-conjugating enzyme]-L-cysteine + N(6)-ubiquitinyl-[acceptor protein]-L-lysine.. It participates in protein modification; protein ubiquitination. Functionally, possesses E3 ubiquitin-protein ligase in vitro. This Oryza sativa subsp. japonica (Rice) protein is U-box domain-containing protein 12 (PUB12).